The primary structure comprises 1593 residues: Autotransporter CRAC (1593 aa).

A signal peptide spans 1 to 54; the sequence is MNKVYNTVWNESTGMWVVTSELTRKGGRRPRQIRRTALAGLIAGLLLPSAPALA. The span at 65 to 85 shows a compositional bias: polar residues; the sequence is GATSSSMSLNAGDTATDTTIN. Disordered stretches follow at residues 65–100 and 1267–1286; these read GATS…SATS and KADS…PVPP. Low complexity predominate over residues 86–97; the sequence is SGGSQRVSSGGS. Over residues 1269 to 1280 the composition is skewed to polar residues; it reads DSSQPGTDNPGT. Positions 1325-1593 constitute an Autotransporter domain; that stretch reads NTRSPGGVWG…TGSVGFRINF (269 aa).

Post-translationally, glycosylated by heptosyltransferas BAHTCr. Glycosylation is required for adhesion to mammalian cells and colonization of the mouse host gastrointestinal tract.

Its subcellular location is the cell outer membrane. In terms of biological role, autotransporter required for the colonization of the mouse host gastrointestinal tract, possibly by mediating bacteria adhesion to host cells. The protein is Autotransporter CRAC of Citrobacter rodentium (strain ICC168) (Citrobacter freundii biotype 4280).